Consider the following 305-residue polypeptide: MIKQRTIKRIVQATGVGLHTGKKVTLTMRPAAANTGIIYRRTDLNPPVDFPADAKSVRDTMLCTCLVNEHDVRISTVEHLNAALAGLGIDNLVIEVDAAEIPIMDGSAAPFVFLLLDAGIDELKCAKKFLRLKEAVRVEDGDKWAELAPYNGFSLDFTIDFNHPAIDASTQRYSLDFSADAFVRQISRARTFGFMRDIEYLQSRGLCLGGSFDCAIVVDDYRVLNEDGLRFEDEFVRHKMLDAIGDLFMCGHNIIGAFTAFKSGHALNNRLLQTVLAKQEAWELVTFEDGEEMPLAFRAPSAVLA.

Positions 79, 238, and 242 each coordinate Zn(2+). The active-site Proton donor is His265.

This sequence belongs to the LpxC family. It depends on Zn(2+) as a cofactor.

The enzyme catalyses a UDP-3-O-[(3R)-3-hydroxyacyl]-N-acetyl-alpha-D-glucosamine + H2O = a UDP-3-O-[(3R)-3-hydroxyacyl]-alpha-D-glucosamine + acetate. It participates in glycolipid biosynthesis; lipid IV(A) biosynthesis; lipid IV(A) from (3R)-3-hydroxytetradecanoyl-[acyl-carrier-protein] and UDP-N-acetyl-alpha-D-glucosamine: step 2/6. Functionally, catalyzes the hydrolysis of UDP-3-O-myristoyl-N-acetylglucosamine to form UDP-3-O-myristoylglucosamine and acetate, the committed step in lipid A biosynthesis. The chain is UDP-3-O-acyl-N-acetylglucosamine deacetylase from Edwardsiella ictaluri (strain 93-146).